We begin with the raw amino-acid sequence, 127 residues long: Secreted RxLR effector protein 3 (127 aa).

The signal sequence occupies residues 1–20; sequence MRPPLLLFLTVTVLVSCASA. A RxLR-dEER motif is present at residues 30–48; that stretch reads RSLRSIKTTTNDDAAEEER.

Belongs to the RxLR effector family.

The protein localises to the secreted. The protein resides in the host cell. Secreted effector that partially suppresses elicitor-induced cell death in host and enhances virulence of P.parasitica. The protein is Secreted RxLR effector protein 3 of Phytophthora nicotianae (Potato buckeye rot agent).